The chain runs to 449 residues: Glutamyl-tRNA reductase (449 aa).

Residues 58 to 61, Ser121, 126 to 128, and Gln132 each bind substrate; these read TCNR and ETQ. Cys59 (nucleophile) is an active-site residue. 203 to 208 contacts NADP(+); that stretch reads GLGEMA.

This sequence belongs to the glutamyl-tRNA reductase family. In terms of assembly, homodimer.

It catalyses the reaction (S)-4-amino-5-oxopentanoate + tRNA(Glu) + NADP(+) = L-glutamyl-tRNA(Glu) + NADPH + H(+). Its pathway is porphyrin-containing compound metabolism; protoporphyrin-IX biosynthesis; 5-aminolevulinate from L-glutamyl-tRNA(Glu): step 1/2. Catalyzes the NADPH-dependent reduction of glutamyl-tRNA(Glu) to glutamate 1-semialdehyde (GSA). In Helicobacter pylori (strain HPAG1), this protein is Glutamyl-tRNA reductase.